Reading from the N-terminus, the 262-residue chain is ATP synthase subunit a (262 aa).

5 helical membrane-spanning segments follow: residues 24–44 (AVHL…LFVF), 84–104 (VIAP…AIDL), 129–149 (DISA…FYTV), 194–214 (LFGN…MYMA), and 228–248 (LVWA…FMML).

This sequence belongs to the ATPase A chain family. F-type ATPases have 2 components, CF(1) - the catalytic core - and CF(0) - the membrane proton channel. CF(1) has five subunits: alpha(3), beta(3), gamma(1), delta(1), epsilon(1). CF(0) has three main subunits: a(1), b(2) and c(9-12). The alpha and beta chains form an alternating ring which encloses part of the gamma chain. CF(1) is attached to CF(0) by a central stalk formed by the gamma and epsilon chains, while a peripheral stalk is formed by the delta and b chains.

It localises to the cell inner membrane. Key component of the proton channel; it plays a direct role in the translocation of protons across the membrane. This is ATP synthase subunit a from Actinobacillus pleuropneumoniae serotype 3 (strain JL03).